Consider the following 297-residue polypeptide: Myozenin-1 (297 aa).

Positions 1 to 34 (MPLSGTPAPNKKRKSSKLIMELTGGGQESSGLNL) are disordered. At Ser82 the chain carries Phosphoserine. Residues 105–172 (FSYSKSSGGG…ALPDNQAGGE (68 aa)) form a disordered region. Low complexity predominate over residues 118 to 128 (RSGSAGQYGSD). The span at 136–162 (SGSGSGSGSGPGSGGAGGPGGHSGRGG) shows a compositional bias: gly residues.

This sequence belongs to the myozenin family. As to quaternary structure, interacts with ACTN2, ACTN3, FLNA, FLNB, FLNC, LDB3, PPP3CA and TCAP. Interacts via its C-terminal region with MYOT.

The protein localises to the nucleus. The protein resides in the cell projection. It is found in the pseudopodium. In terms of biological role, myozenins may serve as intracellular binding proteins involved in linking Z-disk proteins such as alpha-actinin, gamma-filamin, TCAP/telethonin, LDB3/ZASP and localizing calcineurin signaling to the sarcomere. Plays an important role in the modulation of calcineurin signaling. May play a role in myofibrillogenesis. This Bos taurus (Bovine) protein is Myozenin-1 (MYOZ1).